The following is a 725-amino-acid chain: Mitochondrial 15S rRNA processing factor CCM1 (725 aa).

Residues 1 to 21 constitute a mitochondrion transit peptide; sequence MRLSRIGTPKVSVTRVIPVRN. PPR repeat units lie at residues 189 to 223, 224 to 259, 260 to 290, 296 to 330, 333 to 363, 401 to 435, and 601 to 635; these read SAVDVTRLIQNIPKEEKYQHMSLIHEMMFNSGISP, DRYLTDLMMTAFSERSYYEPLVEALFQDYDINGWAP, TDYTFGALIKVYSKGKKLDKINNLLNQMKLK, NKKIYTMVLQTCMKIDDYKKTSEVFDAMKFNSVAT, DTTAYGSMILMHVLNDNVEAALDLYDNLETE, NEKLMTVMMYLTSRDGDLSLTRAIYNTIHESRFKM, and NHDIYHIALQACINNKDIELGQRIWQERGRFRKTP.

This sequence belongs to the CCM1 family. Binds to mitochondrial small subunit 15S rRNA.

It is found in the mitochondrion. In terms of biological role, regulates mitochondrial small subunit maturation by controlling 15S rRNA 5'-end processing. Localizes to the 5' precursor of the 15S rRNA in a position that is subsequently occupied by mS47 in the mature yeast mtSSU. Uses structure and sequence-specific RNA recognition, binding to a single-stranded region of the precursor and specifically recognizing bases -6 to -1. The exchange of Ccm1 for mS47 is coupled to the irreversible removal of precursor rRNA that is accompanied by conformational changes of the mitoribosomal proteins uS5m and mS26. These conformational changes signal completion of 5'-end rRNA processing through protection of the mature 5'-end of the 15S rRNA and stabilization of mS47. The removal of the 5' precursor together with the dissociation of Ccm1 may be catalyzed by the 5'-3' exoribonuclease Pet127. Involved in the specific removal of group I introns in mitochondrial encoded transcripts. In Komagataella phaffii (strain GS115 / ATCC 20864) (Yeast), this protein is Mitochondrial 15S rRNA processing factor CCM1 (CCM1).